The primary structure comprises 311 residues: Homeobox protein CDX-2 (311 aa).

S60 is subject to Phosphoserine. Positions 111-151 are disordered; that stretch reads EYHAHHHPHHHPHHPAASPSCASGLLQTLNLGPPGPAATAA. A compositionally biased stretch (basic residues) spans 114–124; sequence AHHHPHHHPHH. Positions 185–215 are interaction with DNA; sequence KDKYRVVYTDHQRLELEKEFHFSRYITIRRK. The homeobox DNA-binding region spans 185-244; it reads KDKYRVVYTDHQRLELEKEFHFSRYITIRRKSELAATLGLSERQVKIWFQNRRAKERKIK. The interval 227-241 is interaction with 5-mCpG DNA; the sequence is RQVKIWFQNRRAKER. The disordered stretch occupies residues 239 to 311; it reads KERKIKKKQQ…GGVLNSTVTQ (73 aa). The segment covering 248-257 has biased composition (low complexity); sequence QQQQQQQQQQ. Residues 258 to 268 are compositionally biased toward pro residues; sequence PPQPPPQPSQP. At S281 the chain carries Phosphoserine; by CDK2. Residues 281-293 carry the 4S motif; modulates transactivation activity and protein stability motif; it reads SPVTSLQGSVPGS. Residues 285-298 are compositionally biased toward low complexity; the sequence is SLQGSVPGSVPGVL.

This sequence belongs to the Caudal homeobox family. In terms of assembly, can bind DNA as a monomer or homodimer. Ubiquitinated, leading to its degradation by the proteasome. In terms of processing, phosphorylation at Ser-60 reduces transactivation capacity. Phosphorylation at Ser-281 reduces transactivation capacity and increases ubiquitin-dependent proteasome degradation. In the intestine, detected in ileum and proximal and distal colon (at protein level). In adult small intestine, predominantly localized in crypt and lower villus cells of the epithelium (at protein level). Expressed in the intestine but not detected in other tissues including stomach, liver, kidney, spleen, brain, heart, lung, pancreas, skeletal muscle and testis. Expressed specifically in gut epithelium where it is not restricted to a particular cell lineage. Abundant expression is seen in the proximal colon with slightly lower levels in distal colon. Expression in the proximal colon is not restricted either to a particular cell lineage or stage of differentiation while in the distal colon it is more abundant in the differentiated cells towards the top of the crypt.

It is found in the nucleus. Its function is as follows. Transcription factor which regulates the transcription of multiple genes expressed in the intestinal epithelium. Binds to the promoter of the intestinal sucrase-isomaltase SI and activates SI transcription. Binds to the DNA sequence 5'-ATAAAAACTTAT-3' in the promoter region of VDR and activates VDR transcription. Binds to and activates transcription of LPH. Activates transcription of CLDN2 and intestinal mucin MUC2. Binds to the 5'-AATTTTTTACAACACCT-3' DNA sequence in the promoter region of CA1 and activates CA1 transcription. Important in broad range of functions from early differentiation to maintenance of the intestinal epithelial lining of both the small and large intestine. Binds preferentially to methylated DNA. This chain is Homeobox protein CDX-2 (Cdx2), found in Mus musculus (Mouse).